Consider the following 407-residue polypeptide: Phosphonoacetate hydrolase (407 aa).

D25, T64, D202, H206, D241, H242, and H368 together coordinate Zn(2+). 2 residues coordinate substrate: T64 and D202. Substrate contacts are provided by H242 and H368.

The protein belongs to the alkaline phosphatase family. PhnA subfamily. In terms of assembly, homodimer. Requires Zn(2+) as cofactor.

The catalysed reaction is phosphonoacetate + H2O = acetate + phosphate + H(+). Completely inhibited by EDTA and 1,10-phenanthroline. Moderately inhibited by the phosphonocarboxylic acids phosphonoformate and 3-phosphonopropionate and the phosphonate herbicide glyphosate. Partially inhibited by the reducing agents sodium sulfide and dithiotheitol and the chelating agent iminodiacetate. Nonphosphonate analogs of phosphonoacetate, such as arsonoacetate, sulfonoacetate and malonate are poor inhibitors. Inorganic phosphate, acetate and the known phosphonotase inhibitor phosphite have little effect on activity. Not inhibited by the alkylphosphonic acids methylphosphonate and ethylphosphonate, or the aminoalkylphosphonates 2-aminoethylphosphonate, 3-aminopropylphosphonate and 4-aminobutylphosphonate. Fe(3+), Ca(2+), Mg(2+) and Cs(+) have no effect on activity. Activity is slightly increased by the aminoalkylphosphonates 1-aminoethylphosphonate, 1-aminobutylphosphonate, 2-amino-4-butylphosphonate. Activity is increased by Zn(2+), Mn(2+) and Co(2+), these 3 metal ions also allow recovery of activity after EDTA treatment. In terms of biological role, specifically hydrolyzes phosphonoacetate. Does not have activity on other organophosphonates or acetates. This Pseudomonas fluorescens protein is Phosphonoacetate hydrolase.